We begin with the raw amino-acid sequence, 150 residues long: MIDFDGNMINISRKDVVARKATAVGRIYLRKETITAIKNNQVKKGNVIEISRAVGTMYAKNTFLQIPYCHNIPIEGVDVDFSLGENYVEVTCSTTTSYKTGIEMEAINCVNGALLNIWDMVKYLEKDETGNYPETRIEGVHVIKKTKSQE.

Residues 68–70 and 104–105 each bind substrate; these read YCH and ME. Residue Asp-119 is part of the active site.

Belongs to the MoaC family. As to quaternary structure, homohexamer; trimer of dimers.

It catalyses the reaction (8S)-3',8-cyclo-7,8-dihydroguanosine 5'-triphosphate = cyclic pyranopterin phosphate + diphosphate. It functions in the pathway cofactor biosynthesis; molybdopterin biosynthesis. Catalyzes the conversion of (8S)-3',8-cyclo-7,8-dihydroguanosine 5'-triphosphate to cyclic pyranopterin monophosphate (cPMP). The protein is Probable cyclic pyranopterin monophosphate synthase of Thermoplasma volcanium (strain ATCC 51530 / DSM 4299 / JCM 9571 / NBRC 15438 / GSS1).